Reading from the N-terminus, the 549-residue chain is Peptide transport periplasmic protein SapA (549 aa).

The first 21 residues, 1-21, serve as a signal peptide directing secretion; the sequence is MRLVLSSLIVIAGLLSSQATA.

This sequence belongs to the bacterial solute-binding protein 5 family.

It localises to the periplasm. In terms of biological role, involved in a peptide intake transport system that plays a role in the resistance to antimicrobial peptides. The sequence is that of Peptide transport periplasmic protein SapA from Salmonella typhimurium (strain LT2 / SGSC1412 / ATCC 700720).